The chain runs to 186 residues: Tumor necrosis factor, alpha-induced protein 8-like protein 2 A (186 aa).

The protein belongs to the TNFAIP8 family. TNFAIP8L2 subfamily.

Functionally, acts as a negative regulator of innate and adaptive immunity by maintaining immune homeostasis. Negative regulator of Toll-like receptor and T-cell receptor function. Prevents hyperresponsiveness of the immune system and maintains immune homeostasis. Inhibits jun/ap1 and NF-kappa-B activation. Promotes Fas-induced apoptosis. The polypeptide is Tumor necrosis factor, alpha-induced protein 8-like protein 2 A (tnfaip8l2a) (Danio rerio (Zebrafish)).